The following is a 61-amino-acid chain: Large ribosomal subunit protein uL30 (61 aa).

Belongs to the universal ribosomal protein uL30 family. As to quaternary structure, part of the 50S ribosomal subunit.

This is Large ribosomal subunit protein uL30 from Marinomonas sp. (strain MWYL1).